The following is a 741-amino-acid chain: Beta-galactosidase 10 (741 aa).

The N-terminal stretch at 1–29 (MNRVTTESIASTAILVVMVFLFSWRSIEA) is a signal peptide. Residue N31 is glycosylated (N-linked (GlcNAc...) asparagine). The Proton donor role is filled by E188. Residue E257 is the Nucleophile of the active site. N-linked (GlcNAc...) asparagine glycosylation is found at N358, N396, N469, N525, and N583.

This sequence belongs to the glycosyl hydrolase 35 family. Ubiquitous.

It localises to the secreted. Its subcellular location is the extracellular space. The protein localises to the apoplast. It catalyses the reaction Hydrolysis of terminal non-reducing beta-D-galactose residues in beta-D-galactosides.. The sequence is that of Beta-galactosidase 10 (BGAL10) from Arabidopsis thaliana (Mouse-ear cress).